Reading from the N-terminus, the 279-residue chain is Undecaprenyl-diphosphatase (279 aa).

Helical transmembrane passes span 10 to 30, 48 to 68, 96 to 116, 128 to 148, 203 to 223, 229 to 249, and 259 to 279; these read FICF…FLPI, LGVS…IYYF, LFIY…LIKL, GLFS…LSEI, SFLV…FSLF, IDII…IFAI, and NNTL…LTTL.

It belongs to the UppP family.

Its subcellular location is the cell inner membrane. The enzyme catalyses di-trans,octa-cis-undecaprenyl diphosphate + H2O = di-trans,octa-cis-undecaprenyl phosphate + phosphate + H(+). Functionally, catalyzes the dephosphorylation of undecaprenyl diphosphate (UPP). Confers resistance to bacitracin. In Prochlorococcus marinus (strain NATL1A), this protein is Undecaprenyl-diphosphatase.